The chain runs to 1341 residues: MGRPRKNVSQEKIQQLKRELELAGNRTDVLLQDKKGRSRSCLLCRRRKQRCDHKLPSCTACLKAGIKCVQPSKYSSSTSNSNTNNNTPTAGTVPPTPHPVIKRELQDSSIGAGAGAATSLNDMTIIKPISTSNSNVDAGDANEFRKTIKSVTTNSNPNLMRQDKDQYTIFLEKKLKSLETLLDLSPGCNQYNYELSQYKKVSHLFSNNTSDYSRPNSSNMVILPLPSPSNKPLENTNNNGSNVNAATNDTSASTNNINNNNAICQSASLLNDPLETLDFTKCIFAKYNLKKEFLMYDPIFELNEKLSRSFLDTFFTRLQFKYPILDEQEIYTFYDHYLHNKILIPPSSPATSSAAPPSNSHSYSEIEFHFLSGRMWLVFSISAYLLMTTGKYKGFPPHRYFSTAIRHITKCGLHLNYVQQIELLTLLVLYIIRTDRDSLILYDIIKDVMGISKKKLHLNQWYPNDPFANKKLRLFWCVYLLERMICVAVGKPYTIKESEINLPLFNNDSFYTKGVHAAAPSTNDHGVQFINQSLKLRRIESQFVETLQLLKNDSRSVKQSIDQLPLVRKFFEDLEVWRKSYSTLDVKNFENETLKLYYYRSVRLLIQPYLEFFAPEDRLFRECQAAAGQICQLYKIFHQKTLNGHSTPAVHTVFVAGVTLIYCMWLARNFDDQRRKKLGDASKHTRPLISASLFSTMDDLRACSVCLYVMTERSNFARTFRDTFDQLMNATVGNLIERCGPDSSELIFMASSVAKRTEPKNINDEANKAISSGDTLHDSNSANAANLSNSNDKNISHNGGMPPAVARIFGKGQAEEHAGFVENSQVDLAEQEKFKKKQGVLEKTSVPKSLAHLLTKMDDRSRISNSSMSYTTSSSSSSSSSSSSSTLSFPSSQEKNLKINVNNDNNGMTISSVNREHNNNHNNNNDNNNNNNNNNNNSNNNNNVNNNDNESNSRSTTNNSCNNGNNSQYVRNNNVTMENDVERPIQDQYIVKKPTNQTEFDWQVFQQQAFLQQQLAQHNLQAYLSSLNTDTMTNRSPSKSSSISTASSHSDPIPIAMTQSPTPYPQTSNMLPQQHVSRPLPQQQREQPQQHITSPQRFSESNFTNQLNNGMINSNPLQSAIFSNHTSENKQLRDVEESNFSTSPLRADYGNNIISSIPASFTSNSIPVSVKQARNGSSSGDILFSNGAHDMINNISTWTNNSVLDALNSKSILQTIFPQSQEPSSLSMDKQQQQHQQQNMCSENNVTANNFQQTQNDPSYNRNLFMMSNQEGVQYNLDETEKNGPKTQVEANTSANLHFDNVIPTVTNADIRKKRSNWDNMMTSGPVEDFWTINDDYGFLT.

The segment at residues 41 to 68 (CLLCRRRKQRCDHKLPSCTACLKAGIKC) is a DNA-binding region (zn(2)-C6 fungal-type). Low complexity-rich tracts occupy residues 72–93 (SKYSSSTSNSNTNNNTPTAGTV), 779–791 (SNSANAANLSNSN), 864–906 (SNSS…NDNN), 920–967 (NHNN…GNNS), and 1036–1050 (SPSKSSSISTASSHS). 4 disordered regions span residues 72–100 (SKYSSSTSNSNTNNNTPTAGTVPPTPHPV), 770–804 (ISSGDTLHDSNSANAANLSNSNDKNISHNGGMPPA), 864–971 (SNSS…QYVR), and 1031–1116 (TMTN…NSNP). Positions 1057–1076 (MTQSPTPYPQTSNMLPQQHV) are enriched in polar residues. Residues 1078-1090 (RPLPQQQREQPQQ) show a composition bias toward low complexity. Over residues 1091-1116 (HITSPQRFSESNFTNQLNNGMINSNP) the composition is skewed to polar residues. Ser1143 bears the Phosphoserine mark. Polar residues predominate over residues 1220 to 1230 (SQEPSSLSMDK). The interval 1220–1240 (SQEPSSLSMDKQQQQHQQQNM) is disordered.

The protein resides in the nucleus. This is an uncharacterized protein from Saccharomyces cerevisiae (strain ATCC 204508 / S288c) (Baker's yeast).